Consider the following 201-residue polypeptide: MICOS complex subunit MIC27 (201 aa).

A mitochondrion-targeting transit peptide spans 1-31 (MTQDKPIVETISNAGEQVTNVFGQFWQLVTS). Topologically, residues 32 to 117 (KNTTNNGDSK…KCNAYLTEEW (86 aa)) are cytoplasmic. A helical transmembrane segment spans residues 118-138 (TALPKAAAITVGGMAGFVLGL). The Mitochondrial intermembrane portion of the chain corresponds to 139 to 145 (KRGPVGR). Residues 146 to 166 (LLTTTIGLATMAAFCYPIEAV) traverse the membrane as a helical segment. At 167–201 (DVAKTGRAHAEQTWYSFQESPTPSAIVKTNLSPPK) the chain is on the cytoplasmic side.

Belongs to the apolipoprotein O/MICOS complex subunit Mic27 family. Component of the mitochondrial contact site and cristae organizing system (MICOS) complex.

The protein localises to the mitochondrion outer membrane. Sustains mitochondrial morphology probably through maintaining cristae morphology. May act as a component of the MICOS complex, a large protein complex of the mitochondria. This Caenorhabditis elegans protein is MICOS complex subunit MIC27.